We begin with the raw amino-acid sequence, 336 residues long: Vomeronasal type-1 receptor 102 (336 aa).

The Extracellular portion of the chain corresponds to 1 to 42; the sequence is MVGVQICQGMTSEILFFSLQPQFSNMMNKNSRLHIDSNIRNT. The helical transmembrane segment at 43–63 threads the bilayer; that stretch reads FFTEIGIGVSANSLLLLFNIF. At 64–75 the chain is on the cytoplasmic side; sequence KFIHGQRSRLTD. Residues 76-96 traverse the membrane as a helical segment; that stretch reads LPIGLLSLINLLMLLIMACIA. The Extracellular segment spans residues 97–120; sequence TDIFISCRRWDDIICKSLLYLYRT. Residues Cys-111 and Cys-198 are joined by a disulfide bond. Residues 121-140 form a helical membrane-spanning segment; it reads FRGLSLSTTCLLSVLQAIIL. At 141–157 the chain is on the cytoplasmic side; sequence SPRSSCLAKYKHKPPHH. Residues 158–178 traverse the membrane as a helical segment; sequence IFCAMLFLSVLYMFISSHLLL. Over 179–213 the chain is Extracellular; the sequence is SIIATPNLTTNDFIHVSQSCSILPMSYLMQSMFST. Residue Asn-185 is glycosylated (N-linked (GlcNAc...) asparagine). Residues 214–234 form a helical membrane-spanning segment; sequence LLAIRNVFLISLIVLSTWYMV. Residues 235 to 264 are Cytoplasmic-facing; the sequence is ALLCRHRKQTRHLQDTSLSRKASPEQRATR. The chain crosses the membrane as a helical span at residues 265 to 285; sequence SILMLRSLFVLMSIFDSIVSC. Residues 286–296 are Extracellular-facing; the sequence is SRTMYLNDPTS. The helical transmembrane segment at 297–317 threads the bilayer; the sequence is YSIQLLVVHIYATVSPFVFMI. Residues 318–336 are Cytoplasmic-facing; that stretch reads TEKHIVNYLKSMYVRVLNV.

Belongs to the G-protein coupled receptor 1 family. Expressed in 1-4% of neurons of the vomeronasal organ. Only one pheromone receptor gene may be expressed in a particular neuron. Not expressed in the main olfactory epithelium.

It is found in the cell membrane. Its function is as follows. Putative pheromone receptor implicated in the regulation of social as well as reproductive behavior. This Rattus norvegicus (Rat) protein is Vomeronasal type-1 receptor 102 (Vom1r102).